Here is a 505-residue protein sequence, read N- to C-terminus: ATP synthase subunit alpha (505 aa).

An ATP-binding site is contributed by 170-177 (GDRQTGKT).

Belongs to the ATPase alpha/beta chains family. In terms of assembly, F-type ATPases have 2 components, CF(1) - the catalytic core - and CF(0) - the membrane proton channel. CF(1) has five subunits: alpha(3), beta(3), gamma(1), delta(1), epsilon(1). CF(0) has four main subunits: a(1), b(1), b'(1) and c(9-12).

It is found in the cellular thylakoid membrane. The catalysed reaction is ATP + H2O + 4 H(+)(in) = ADP + phosphate + 5 H(+)(out). Functionally, produces ATP from ADP in the presence of a proton gradient across the membrane. The alpha chain is a regulatory subunit. This Synechococcus elongatus (strain ATCC 33912 / PCC 7942 / FACHB-805) (Anacystis nidulans R2) protein is ATP synthase subunit alpha.